We begin with the raw amino-acid sequence, 228 residues long: Lipoprotein-releasing system ATP-binding protein LolD (228 aa).

The ABC transporter domain occupies 6–228; it reads LRLSGIEKTY…LSDGRLSAES (223 aa). 43-50 lines the ATP pocket; it reads APSGAGKS.

The protein belongs to the ABC transporter superfamily. Lipoprotein translocase (TC 3.A.1.125) family. The complex is composed of two ATP-binding proteins (LolD) and two transmembrane proteins (LolC and LolE).

It localises to the cell inner membrane. Functionally, part of the ABC transporter complex LolCDE involved in the translocation of mature outer membrane-directed lipoproteins, from the inner membrane to the periplasmic chaperone, LolA. Responsible for the formation of the LolA-lipoprotein complex in an ATP-dependent manner. The protein is Lipoprotein-releasing system ATP-binding protein LolD of Ruegeria pomeroyi (strain ATCC 700808 / DSM 15171 / DSS-3) (Silicibacter pomeroyi).